The chain runs to 273 residues: Shikimate dehydrogenase (NADP(+)) (273 aa).

Residues 14 to 16 (SKS) and Thr-61 contribute to the shikimate site. Residue Lys-65 is the Proton acceptor of the active site. Glu-77 contributes to the NADP(+) binding site. Asn-86 and Asp-102 together coordinate shikimate. NADP(+) is bound by residues 126-130 (GAGGA), 150-155 (NRTLSK), and Met-214. Position 216 (Tyr-216) interacts with shikimate. Gly-238 lines the NADP(+) pocket.

The protein belongs to the shikimate dehydrogenase family. In terms of assembly, homodimer.

The catalysed reaction is shikimate + NADP(+) = 3-dehydroshikimate + NADPH + H(+). Its pathway is metabolic intermediate biosynthesis; chorismate biosynthesis; chorismate from D-erythrose 4-phosphate and phosphoenolpyruvate: step 4/7. Functionally, involved in the biosynthesis of the chorismate, which leads to the biosynthesis of aromatic amino acids. Catalyzes the reversible NADPH linked reduction of 3-dehydroshikimate (DHSA) to yield shikimate (SA). This chain is Shikimate dehydrogenase (NADP(+)), found in Photobacterium profundum (strain SS9).